The sequence spans 43 residues: Seed non-specific lipid transfer protein-like (43 aa).

Belongs to the plant LTP family. As to quaternary structure, homodimer.

Functionally, plant non-specific lipid-transfer proteins transfer phospholipids as well as galactolipids across membranes. May play a role in wax or cutin deposition in the cell walls of expanding epidermal cells and certain secretory tissues. This isoform inhibits the hyphal growth of several fungi in vitro. The protein is Seed non-specific lipid transfer protein-like of Raphanus sativus (Radish).